The chain runs to 477 residues: E3 ubiquitin-protein ligase TRIM17 (477 aa).

Residues 16–66 form an RING-type zinc finger; sequence CSICLDYFTDPVMTACGHNFCRECIQMSWEKGKVKKGKKKQKGSFPCPECR. The B box-type zinc-finger motif lies at 94-135; the sequence is QKRDLCQAHQEPLKLFCQDDQSPICVVCREAQEHRMHRVLPL. Cys-99, His-102, Cys-121, and His-127 together coordinate Zn(2+). Residues 135–226 are a coiled coil; the sequence is LDEAAREYKL…KLQDSKASLD (92 aa). Residues 276–475 form the B30.2/SPRY domain; it reads AIKTLCRVPG…MVISTVTMWV (200 aa).

This sequence belongs to the TRIM/RBCC family. In terms of assembly, interacts (via coiled coil) with TRIM44 (via coiled coil). Interacts with TRIM28; this interaction prevents TRIM28 activity on BCL2A1. Interacts with TRIM41; this interaction prevents TRIM41 activity on ZSCAN2. Interacts with BECN1. Interacts with NFATC3 and NFATC4; these interactions prevent NFATC3 and NFATC4 nuclear localization. Auto-ubiquitinated. As to expression, almost exclusively in the testis.

The protein localises to the cytoplasm. Its subcellular location is the lysosome. The enzyme catalyses S-ubiquitinyl-[E2 ubiquitin-conjugating enzyme]-L-cysteine + [acceptor protein]-L-lysine = [E2 ubiquitin-conjugating enzyme]-L-cysteine + N(6)-ubiquitinyl-[acceptor protein]-L-lysine.. Its pathway is protein modification; protein ubiquitination. In terms of biological role, E3 ubiquitin ligase that plays important roles in the regulation of neuronal apoptosis, selective autophagy or cell proliferation. Stimulates the degradation of kinetochore ZW10 interacting protein ZWINT in a proteasome-dependent manner, leading to negative regulation of cell proliferation. Inhibits autophagic degradation of diverse known targets while contributing to autophagy of midbodies. Autophagy-inhibitory activity involves MCL1, which TRIM17 assembles into complexes with the key autophagy regulator BECN1. Controls neuronal apoptosis by mediating ubiquitination and degradation of MCL1 to initiate neuronal death. In addition, regulates NFAT transcription factors NFATC3 and NFATC4 activities by preventing their nuclear localization, thus inhibiting their transcriptional activities. Decreases TRIM41-mediated degradation of ZSCAN2 thereby stimulating alpha-synuclein/SNCA transcription in neuronal cells. Prevents the E3 ubiquitin-ligase activity of TRIM28 and its interaction with anti-apoptotic BCL2A1, blocking TRIM28 from ubiquitinating BCL2A1. This is E3 ubiquitin-protein ligase TRIM17 (Trim17) from Mus musculus (Mouse).